Consider the following 481-residue polypeptide: 7-deoxyloganetin glucosyltransferase (481 aa).

His-22 acts as the Proton acceptor in catalysis. His-22 lines the an anthocyanidin pocket. Asp-126 serves as the catalytic Charge relay. UDP-alpha-D-glucose is bound by residues Thr-148, Gln-363, His-378, Trp-381, Asn-382, Ser-383, and Glu-386. Ala-401 provides a ligand contact to an anthocyanidin. UDP-alpha-D-glucose contacts are provided by Glu-402 and Gln-403.

This sequence belongs to the UDP-glycosyltransferase family. Ubiquitous. Very low expression in stems.

The catalysed reaction is 7-deoxyloganetin + UDP-alpha-D-glucose = 7-deoxyloganin + UDP + H(+). Its function is as follows. Iridoid glucosyltransferase acting on genipin and 7-deoxyloganetin. No activity with 7-deoxyloganetic acid. Involved in geniposide biosynthesis. In Gardenia jasminoides (Cape jasmine), this protein is 7-deoxyloganetin glucosyltransferase (UGT85A24).